Reading from the N-terminus, the 79-residue chain is Acyl carrier protein (79 aa).

Residues 3–78 enclose the Carrier domain; it reads QEILEKVRSI…DAVSYIQEKK (76 aa). At S38 the chain carries O-(pantetheine 4'-phosphoryl)serine.

This sequence belongs to the acyl carrier protein (ACP) family. In terms of processing, 4'-phosphopantetheine is transferred from CoA to a specific serine of apo-ACP by AcpS. This modification is essential for activity because fatty acids are bound in thioester linkage to the sulfhydryl of the prosthetic group.

The protein localises to the cytoplasm. It participates in lipid metabolism; fatty acid biosynthesis. Its function is as follows. Carrier of the growing fatty acid chain in fatty acid biosynthesis. In Synechococcus sp. (strain RCC307), this protein is Acyl carrier protein.